A 53-amino-acid polypeptide reads, in one-letter code: Small ribosomal subunit protein uS14 (53 aa).

4 residues coordinate Zn(2+): Cys-17, Cys-20, Cys-36, and Cys-39.

Belongs to the universal ribosomal protein uS14 family. Zinc-binding uS14 subfamily. In terms of assembly, part of the 30S ribosomal subunit. Requires Zn(2+) as cofactor.

In terms of biological role, binds 16S rRNA, required for the assembly of 30S particles. This Methanococcus maripaludis (strain DSM 14266 / JCM 13030 / NBRC 101832 / S2 / LL) protein is Small ribosomal subunit protein uS14.